The chain runs to 206 residues: Small ribosomal subunit protein uS4 (206 aa).

In terms of domain architecture, S4 RNA-binding spans 96–156 (TRLDNVVYRM…EKSRTQARIK (61 aa)).

This sequence belongs to the universal ribosomal protein uS4 family. Part of the 30S ribosomal subunit. Contacts protein S5. The interaction surface between S4 and S5 is involved in control of translational fidelity.

Its function is as follows. One of the primary rRNA binding proteins, it binds directly to 16S rRNA where it nucleates assembly of the body of the 30S subunit. In terms of biological role, with S5 and S12 plays an important role in translational accuracy. The protein is Small ribosomal subunit protein uS4 of Shewanella putrefaciens (strain CN-32 / ATCC BAA-453).